The chain runs to 645 residues: Pro-neuregulin-1, membrane-bound isoform (645 aa).

Positions 1–19 (MSERKEGRGKGKGKKKDRG) are excised as a propeptide. The tract at residues 1-52 (MSERKEGRGKGKGKKKDRGSRGKPAPAEGDPSPALPPRLKEMKSQESAAGSK) is disordered. Residues 20 to 247 (SRGKPAPAEG…MEAEELYQKR (228 aa)) are Extracellular-facing. The Ig-like C2-type domain maps to 37 to 128 (PRLKEMKSQE…GNDSASANIT (92 aa)). The cysteines at positions 57 and 112 are disulfide-linked. Positions 139–164 (MSASTERPYVSSESPIRISVSTEGAN) are enriched in polar residues. Residues 139-175 (MSASTERPYVSSESPIRISVSTEGANTSSSTSTSTTG) form a disordered region. The segment covering 165–175 (TSSSTSTSTTG) has biased composition (low complexity). Residues 178-222 (HLIKCAEKEKTFCVNGGECFMVKDLSNPSRYLCKCPNEFTGDRCQ) enclose the EGF-like domain. 3 cysteine pairs are disulfide-bonded: C182–C196, C190–C210, and C212–C221. A helical transmembrane segment spans residues 248–268 (VLTITGICIALLVVGIMCVVA). At 269 to 645 (YCKTKKQRQK…VIANQDPIAV (377 aa)) the chain is on the cytoplasmic side. Over residues 340-355 (SHYTSTAHHSTTVTQT) the composition is skewed to low complexity. Disordered stretches follow at residues 340 to 364 (SHYT…SNGH), 380 to 406 (SVEN…PREC), 433 to 463 (MTTP…PVSS), and 531 to 593 (ETTQ…DTPF). Gly residues predominate over residues 392–402 (GPRGRLHGLGG). Basic residues predominate over residues 547–557 (TNSRRAKRTKP). Positions 568–579 (DSNPSSVSSNSE) are enriched in low complexity.

It belongs to the neuregulin family. As to quaternary structure, the cytoplasmic domain interacts with the LIM domain region of LIMK1. Forms a ternary complex with ERBB3 and ITGAV:ITGB3 or ITGA6:ITGB4. Interacts with NRDC and BACE1. Proteolytic cleavage close to the plasma membrane on the external face leads to the release of the soluble growth factor form. Post-translationally, N- and O-glycosylated. Extensive glycosylation precedes the proteolytic cleavage.

The protein localises to the cell membrane. The protein resides in the secreted. Direct ligand for ERBB3 and ERBB4 tyrosine kinase receptors. Concomitantly recruits ERBB1 and ERBB2 coreceptors, resulting in ligand-stimulated tyrosine phosphorylation and activation of the ERBB receptors. Perform diverse functions such as inducing growth and differentiation of epithelial, glial, neuronal, and skeletal muscle cells; inducing expression of acetylcholine receptor in synaptic vesicles during the formation of the neuromuscular junction; stimulating lobuloalveolar budding and milk production in the mammary gland and inducing differentiation of mammary tumor cells; stimulating Schwann cell proliferation; implication in the development of the myocardium such as trabeculation of the developing heart. Binds to ERBB4 and ERBB3. Acts as a ligand for integrins and binds (via EGF domain) to integrins ITGAV:ITGB3 or ITGA6:ITGB4. Its binding to integrins and subsequent ternary complex formation with integrins and ERRB3 are essential for NRG1-ERBB signaling. Induces the phosphorylation and activation of MAPK3/ERK1, MAPK1/ERK2 and AKT1, and ligand-dependent ERBB4 endocytosis is essential for the NRG1-mediated activation of these kinases in neurons. This is Pro-neuregulin-1, membrane-bound isoform from Mus musculus (Mouse).